Reading from the N-terminus, the 179-residue chain is Replication restart protein DnaT (179 aa).

The segment at 156-179 (GGLPKRDVNTVSEPDSQIPPGFRG) is disordered.

It belongs to the DnaT family. Homooligomerizes. Interacts with PriB. Component of the replication restart primosome. Primosome assembly occurs via a 'hand-off' mechanism. PriA binds to replication forks, subsequently PriB then DnaT bind; DnaT then displaces ssDNA to generate the helicase loading substrate.

Its function is as follows. Involved in the restart of stalled replication forks, which reloads the replicative helicase on sites other than the origin of replication. Can function in multiple replication restart pathways. Displaces ssDNA from a PriB-ssDNA complex. Probably forms a spiral filament on ssDNA. In Escherichia coli O157:H7, this protein is Replication restart protein DnaT.